We begin with the raw amino-acid sequence, 291 residues long: uncharacterized protein (291 aa).

The protein belongs to the pseudouridine synthase RluA family.

It catalyses the reaction a uridine in RNA = a pseudouridine in RNA. This is an uncharacterized protein from Synechocystis sp. (strain ATCC 27184 / PCC 6803 / Kazusa).